Reading from the N-terminus, the 1009-residue chain is DENN domain-containing protein 1A (1009 aa).

The uDENN domain maps to 13–145 (FEVYVEVAYP…HKLPIPDPGV (133 aa)). In terms of domain architecture, cDENN spans 162–298 (ELPSIPENRN…VISSLKNRLK (137 aa)). The 79-residue stretch at 300 to 378 (VSTTTGDGVA…DGRLDLLNSG (79 aa)) folds into the dDENN domain. An FXDXF motif motif is present at residues 381–385 (FSDVF). The segment at 453-564 (DIAENGCAPT…TGPVPAPPDR (112 aa)) is disordered. A Phosphoserine modification is found at Ser-473. Over residues 477–489 (EAKDPKLREDRRP) the composition is skewed to basic and acidic residues. Residues 500–509 (PRPHVVKRPK) are compositionally biased toward basic residues. At Thr-519 the chain carries Phosphothreonine. Phosphoserine occurs at positions 520, 523, 536, 538, and 546. The Clathrin box motif lies at 569–578 (DLLEDVFSNL). Ser-592 is modified (phosphoserine). A disordered region spans residues 648–714 (IPSKPPAASP…RKTPELGIVP (67 aa)). A Phosphoserine modification is found at Ser-749. 2 disordered regions span residues 796–831 (STLP…QPPL) and 928–1009 (RSSA…ETFE). Composition is skewed to pro residues over residues 820–831 (AGTPTPFPQPPL) and 945–957 (GDPP…PPQG). A compositionally biased stretch (basic and acidic residues) spans 972–983 (DPFEDLLQKTKQ). Low complexity predominate over residues 986-997 (SPSPALAPAPDS). Positions 999–1009 (EQLRKQWETFE) are enriched in basic and acidic residues.

Interacts with RAB35. Interacts with clathrin and with the adapter protein complex 2, AP-2. Interacts with ITSN1 and SH3GL2. Interacts (when phosphorylated) with YWHAE. In terms of processing, phosphorylated on serine and/or threonine in an Akt-dependent manner. Phosphorylation probably regulates the guanine nucleotide exchange factor (GEF) activity, possibly by disrupting an intramolecular interaction between the DENN domain and the C-terminus of the protein, thereby relieving the autoinhibition.

The protein localises to the cytoplasmic vesicle. The protein resides in the clathrin-coated vesicle membrane. It is found in the presynaptic cell membrane. Its activity is regulated as follows. The guanine nucleotide exchange factor (GEF) activity is autoinhibited. Autoinhibition may be the result of intramolecular interaction between the DENN domain and the C-terminus, which is disrupted upon phosphorylation. Activation is regulated by Akt activation. Guanine nucleotide exchange factor (GEF) regulating clathrin-mediated endocytosis through RAB35 activation. Promotes the exchange of GDP to GTP, converting inactive GDP-bound RAB35 into its active GTP-bound form. Regulates clathrin-mediated endocytosis of synaptic vesicles and mediates exit from early endosomes. Binds phosphatidylinositol-phosphates (PtdInsPs), with some preference for PtdIns(3)P. In Homo sapiens (Human), this protein is DENN domain-containing protein 1A.